The primary structure comprises 344 residues: MTERSDRDVSPALTVGEGDIDVSLRPRSLREFIGQPRVREQLQLVIEGAKNRGGTPDHILLSGPPGLGKTSLAMIIAAELGSSLRVTSGPALERAGDLAAMLSNLVEHDVLFIDEIHRIARPAEEMLYLAMEDFRVDVVVGKGPGATSIPLEVAPFTLVGATTRSGALTGPLRDRFGFTAHMDFYEPAELERVLARSAGILGIELGADAGAEIARRSRGTPRIANRLLRRVRDFAEVRADGVITRDVAKAALEVYDVDELGLDRLDRAVLSALTRSFGGGPVGVSTLAVAVGEEAATVEEVCEPFLVRAGMVARTPRGRVATALAWTHLGMTPPVGASQPGLFE.

A large ATPase domain (RuvB-L) region spans residues 1-185; the sequence is MTERSDRDVS…FGFTAHMDFY (185 aa). ATP is bound by residues leucine 24, arginine 25, glycine 66, lysine 69, threonine 70, serine 71, 132–134, arginine 175, tyrosine 185, and arginine 222; that span reads EDF. Residue threonine 70 participates in Mg(2+) binding. Positions 186-256 are small ATPAse domain (RuvB-S); it reads EPAELERVLA…VAKAALEVYD (71 aa). The segment at 259–344 is head domain (RuvB-H); that stretch reads ELGLDRLDRA…VGASQPGLFE (86 aa). The DNA site is built by arginine 314 and arginine 319.

This sequence belongs to the RuvB family. In terms of assembly, homohexamer. Forms an RuvA(8)-RuvB(12)-Holliday junction (HJ) complex. HJ DNA is sandwiched between 2 RuvA tetramers; dsDNA enters through RuvA and exits via RuvB. An RuvB hexamer assembles on each DNA strand where it exits the tetramer. Each RuvB hexamer is contacted by two RuvA subunits (via domain III) on 2 adjacent RuvB subunits; this complex drives branch migration. In the full resolvosome a probable DNA-RuvA(4)-RuvB(12)-RuvC(2) complex forms which resolves the HJ.

It localises to the cytoplasm. The enzyme catalyses ATP + H2O = ADP + phosphate + H(+). In terms of biological role, the RuvA-RuvB-RuvC complex processes Holliday junction (HJ) DNA during genetic recombination and DNA repair, while the RuvA-RuvB complex plays an important role in the rescue of blocked DNA replication forks via replication fork reversal (RFR). RuvA specifically binds to HJ cruciform DNA, conferring on it an open structure. The RuvB hexamer acts as an ATP-dependent pump, pulling dsDNA into and through the RuvAB complex. RuvB forms 2 homohexamers on either side of HJ DNA bound by 1 or 2 RuvA tetramers; 4 subunits per hexamer contact DNA at a time. Coordinated motions by a converter formed by DNA-disengaged RuvB subunits stimulates ATP hydrolysis and nucleotide exchange. Immobilization of the converter enables RuvB to convert the ATP-contained energy into a lever motion, pulling 2 nucleotides of DNA out of the RuvA tetramer per ATP hydrolyzed, thus driving DNA branch migration. The RuvB motors rotate together with the DNA substrate, which together with the progressing nucleotide cycle form the mechanistic basis for DNA recombination by continuous HJ branch migration. Branch migration allows RuvC to scan DNA until it finds its consensus sequence, where it cleaves and resolves cruciform DNA. The protein is Holliday junction branch migration complex subunit RuvB of Mycobacterium tuberculosis (strain ATCC 25177 / H37Ra).